The sequence spans 661 residues: Probable urea active transporter 3 (661 aa).

Helical transmembrane passes span 13-33 (GIVI…TYVL), 56-76 (GLIS…LTSA), 86-106 (GSMW…VIAL), 132-152 (AVFL…LLLG), 165-185 (VVAA…SGGL), 197-217 (VIVY…SVHI), 251-271 (AVFV…CDPS), 288-308 (YFAG…AAAL), 352-372 (AGVL…LVAF), 397-417 (VTHV…VLFN), 419-439 (IGIT…PAVF), 454-474 (GMII…VGSC), 495-515 (VGNF…SYFF), 556-576 (IGIF…PLPM), and 591-611 (WIIV…FYPL).

This sequence belongs to the sodium:solute symporter (SSF) (TC 2.A.21) family.

The protein resides in the membrane. It localises to the golgi apparatus membrane. Functionally, involved in active transport of urea. This is Probable urea active transporter 3 (dur3-3) from Schizosaccharomyces pombe (strain 972 / ATCC 24843) (Fission yeast).